A 551-amino-acid polypeptide reads, in one-letter code: MFS-type transporter ATEG_00331 (551 aa).

Positions 1 to 18 (MKAWLLVSSLCLSTFIAA) are cleaved as a signal peptide. The next 4 helical transmembrane spans lie at 40 to 60 (LEFT…TPPW), 71 to 91 (PVLM…ALAI), 102 to 122 (IQGT…GDVF), and 132 to 152 (GVLG…GGAF). Asn-165 and Asn-178 each carry an N-linked (GlcNAc...) asparagine glycan. The next 8 membrane-spanning stretches (helical) occupy residues 179–199 (LTTS…FLEV), 206–228 (IIEG…TVMF), 233–255 (GYGG…FGIG), 324–344 (VYLL…GLYI), 354–374 (IYFG…LQPY), 380–400 (IIIF…APII), 417–437 (TVFF…GVIF), and 493–513 (SEWI…VFIS). Asn-524 carries N-linked (GlcNAc...) asparagine glycosylation.

Belongs to the major facilitator superfamily. TCR/Tet family.

The protein localises to the membrane. Functionally, MFS-type transporter; part of the gene cluster that mediates the biosynthesis of isoflavipucine. In Aspergillus terreus (strain NIH 2624 / FGSC A1156), this protein is MFS-type transporter ATEG_00331.